We begin with the raw amino-acid sequence, 642 residues long: Kelch-like protein 17 (642 aa).

The segment at 1-53 (MQPRSERPAGRTQSPEHGSPGPGPEAPPPPPPQPPAPEAERTRPRQARPAAPM) is disordered. Pro residues predominate over residues 21-37 (GPGPEAPPPPPPQPPAP). The region spanning 92–159 (CDIVLHVAAK…AYTAEIVVGE (68 aa)) is the BTB domain. The BACK domain maps to 194–296 (CLGIRGFADA…SRDFLLGHVD (103 aa)). The interval 289-641 (DFLLGHVDAE…SPTLSVSSTS (353 aa)) is interaction with F-actin. 6 Kelch repeats span residues 343–389 (VLFA…AVGN), 390–436 (RLYA…ALHG), 438–483 (LYSA…TLDG), 484–530 (NLYA…VLEG), 532–577 (LYVA…AMDG), and 578–624 (WLYA…VLEL). Residues 640-642 (TSL) are interaction with PDZK1.

In terms of assembly, interacts with F-actin; the interaction disrupts the F-actin structures and leads to marked changes of neuronal morphology. Component of a complex, composed of PDZK1, SYNGAP1, KLHL17 and NMDA receptors. Interacts directly with PDZK1 (via PDZ1 domain); the interaction is important for integrity of actin cytoskeleton structures in neurons. Interacts with DLG4 and SYNGAP1. Interacts (via kelch repeats) with GRIK2 (via C-terminus); the interaction targets GRIK2 for degradation via ubiquitin-proteasome pathway. Interacts with GRIK1. Interacts with (via BTB domain) CUL3; the interaction regulates surface GRIK2 expression.

It is found in the postsynaptic density. Its subcellular location is the synapse. The protein operates within protein modification; protein ubiquitination. Functionally, substrate-recognition component of some cullin-RING-based BCR (BTB-CUL3-RBX1) E3 ubiquitin-protein ligase complexes. The BCR(KLHL17) complex mediates the ubiquitination and subsequent degradation of GLUR6. May play a role in the actin-based neuronal function. The protein is Kelch-like protein 17 (KLHL17) of Homo sapiens (Human).